The chain runs to 165 residues: Protein NKG7 (165 aa).

4 helical membrane passes run 9-29 (LFAGSLGLTSSLIALTTDFWI), 61-81 (FCILAVLWGLVSVSFLILSCI), 92-112 (LVSTVMAFSAALSILVAMAVY), and 133-153 (FYLGWVSFILFLFAGCLSLGA).

This sequence belongs to the PMP-22/EMP/MP20 family. As to expression, predominantly expressed by leukocytes with cytotoxic activity such as CD8(+) T-cells and natural killer cells.

It is found in the cell membrane. The protein localises to the cytolytic granule membrane. Its function is as follows. Regulates cytotoxic granule exocytosis in effector lymphocytes, thus acting as a critical mediator of inflammation in a broad range of infectious and non-infectious diseases. Essential for cytotoxic degranulation of natural killer (NK) cells and CD8(+) T-cells and for the activation of CD4(+) T-cells following infection. Plays a critical role in CD8(+) T-cell and NK cell-mediated cytolysis of target cells and contributes to the cytolytic activity via the perforin/granzyme pathway by enhancing exocytosis of LAMP1-carrying lytic granules. Contributes to NK cell-mediated control of cancer metastasis. The chain is Protein NKG7 (Nkg7) from Mus musculus (Mouse).